Here is a 241-residue protein sequence, read N- to C-terminus: Large ribosomal subunit protein uL3 (241 aa).

Disordered regions lie at residues 139–164 (VSHRSIGSTGGRQDPGKTFKNKKMPG) and 215–241 (DAPKPGKFRLANGGDEVAAPAAEQEGA). Glutamine 151 carries the N5-methylglutamine modification.

It belongs to the universal ribosomal protein uL3 family. As to quaternary structure, part of the 50S ribosomal subunit. Forms a cluster with proteins L14 and L19. Post-translationally, methylated by PrmB.

In terms of biological role, one of the primary rRNA binding proteins, it binds directly near the 3'-end of the 23S rRNA, where it nucleates assembly of the 50S subunit. The protein is Large ribosomal subunit protein uL3 of Rhodopseudomonas palustris (strain BisB5).